The primary structure comprises 159 residues: uncharacterized protein (159 aa).

The next 4 membrane-spanning stretches (helical) occupy residues 22–42 (LFSSSLYHSAFDCSFGISFTI), 45–65 (PIEYIVLSKPCFFAITPLLTL), 80–100 (IWVSTVTSLPISHCLIVSLSL), and 104–124 (FPSLFYSALVLSCLSLLCLAF).

It localises to the membrane. This is an uncharacterized protein from Schizosaccharomyces pombe (strain 972 / ATCC 24843) (Fission yeast).